The following is a 421-amino-acid chain: Dihydroorotase (421 aa).

Residues H59 and H61 each coordinate Zn(2+). Residues 61 to 63 and N93 contribute to the substrate site; that span reads HLR. The Zn(2+) site is built by D150, H177, and H230. N276 lines the substrate pocket. D303 contributes to the Zn(2+) binding site. The active site involves D303. H307 contacts substrate.

This sequence belongs to the metallo-dependent hydrolases superfamily. DHOase family. Class I DHOase subfamily. The cofactor is Zn(2+).

It catalyses the reaction (S)-dihydroorotate + H2O = N-carbamoyl-L-aspartate + H(+). It functions in the pathway pyrimidine metabolism; UMP biosynthesis via de novo pathway; (S)-dihydroorotate from bicarbonate: step 3/3. Its function is as follows. Catalyzes the reversible cyclization of carbamoyl aspartate to dihydroorotate. This chain is Dihydroorotase, found in Desulfotalea psychrophila (strain LSv54 / DSM 12343).